The sequence spans 440 residues: Lysine histidine transporter-like 6 (440 aa).

Residues methionine 1–serine 10 are compositionally biased toward polar residues. The tract at residues methionine 1 to aspartate 25 is disordered. Over methionine 1–lysine 31 the chain is Cytoplasmic. The span at lysine 11–aspartate 25 shows a compositional bias: basic and acidic residues. Residues tryptophan 32–leucine 51 form a helical membrane-spanning segment. The Extracellular portion of the chain corresponds to proline 52 to glycine 61. Residues proline 62–valine 82 traverse the membrane as a helical segment. Topologically, residues glutamine 83–glycine 109 are cytoplasmic. The chain crosses the membrane as a helical span at residues proline 110–valine 130. Residues threonine 131–glutamine 152 lie on the Extracellular side of the membrane. The chain crosses the membrane as a helical span at residues serine 153–asparagine 173. Serine 174 is a topological domain (cytoplasmic). The chain crosses the membrane as a helical span at residues valine 175–glycine 195. Over glycine 196–arginine 221 the chain is Extracellular. Residues valine 222–isoleucine 242 traverse the membrane as a helical segment. Residues glutamine 243–glycine 261 lie on the Cytoplasmic side of the membrane. A helical membrane pass occupies residues valine 262 to tryptophan 282. Over alanine 283 to alanine 300 the chain is Extracellular. The chain crosses the membrane as a helical span at residues tryptophan 301 to phenylalanine 321. Residues alanine 322–tyrosine 353 lie on the Cytoplasmic side of the membrane. The next 2 membrane-spanning stretches (helical) occupy residues valine 354–phenylalanine 374 and glycine 375–lysine 395. Residues lysine 396–arginine 399 are Cytoplasmic-facing. A helical membrane pass occupies residues phenylalanine 400–alanine 420. Over serine 421–alanine 440 the chain is Extracellular.

The protein belongs to the amino acid/polyamine transporter 2 family. Amino acid/auxin permease (AAAP) (TC 2.A.18.2) subfamily.

The protein localises to the cell membrane. Amino acid transporter. This Arabidopsis thaliana (Mouse-ear cress) protein is Lysine histidine transporter-like 6.